Consider the following 340-residue polypeptide: Ketol-acid reductoisomerase (NADP(+)) (340 aa).

A KARI N-terminal Rossmann domain is found at 2-181 (VKMYYEADVK…GCTKAGVIET (180 aa)). NADP(+)-binding positions include 25-28 (YGSQ), Arg48, Ser52, and 82-85 (DERQ). His107 is a catalytic residue. Residue Gly133 coordinates NADP(+). In terms of domain architecture, KARI C-terminal knotted spans 182–327 (SFREETETDL…EQLRGMMSWI (146 aa)). Mg(2+) contacts are provided by Asp190, Glu194, Glu226, and Glu230. Ser251 contacts substrate.

Belongs to the ketol-acid reductoisomerase family. It depends on Mg(2+) as a cofactor.

It catalyses the reaction (2R)-2,3-dihydroxy-3-methylbutanoate + NADP(+) = (2S)-2-acetolactate + NADPH + H(+). It carries out the reaction (2R,3R)-2,3-dihydroxy-3-methylpentanoate + NADP(+) = (S)-2-ethyl-2-hydroxy-3-oxobutanoate + NADPH + H(+). The protein operates within amino-acid biosynthesis; L-isoleucine biosynthesis; L-isoleucine from 2-oxobutanoate: step 2/4. It functions in the pathway amino-acid biosynthesis; L-valine biosynthesis; L-valine from pyruvate: step 2/4. Functionally, involved in the biosynthesis of branched-chain amino acids (BCAA). Catalyzes an alkyl-migration followed by a ketol-acid reduction of (S)-2-acetolactate (S2AL) to yield (R)-2,3-dihydroxy-isovalerate. In the isomerase reaction, S2AL is rearranged via a Mg-dependent methyl migration to produce 3-hydroxy-3-methyl-2-ketobutyrate (HMKB). In the reductase reaction, this 2-ketoacid undergoes a metal-dependent reduction by NADPH to yield (R)-2,3-dihydroxy-isovalerate. The polypeptide is Ketol-acid reductoisomerase (NADP(+)) (Brevibacillus brevis (strain 47 / JCM 6285 / NBRC 100599)).